The chain runs to 597 residues: Alpha-1,2-mannosyltransferase MNN2 (597 aa).

The Cytoplasmic portion of the chain corresponds to 1–12 (MLLTKRFSKLFK). Residues 13–28 (LTFIVLILCGLFVITN) traverse the membrane as a helical; Signal-anchor for type II membrane protein segment. At 29 to 597 (KYMDENTSVK…STHDKAIAGK (569 aa)) the chain is on the extracellular side. Asparagine 34, asparagine 363, and asparagine 473 each carry an N-linked (GlcNAc...) asparagine glycan.

Belongs to the MNN1/MNT family. Interacts with SVP26.

The protein resides in the golgi apparatus membrane. It functions in the pathway protein modification; protein glycosylation. In terms of biological role, alpha-1,2-mannosyltransferase, responsible for addition of the first alpha-1,2-linked mannose to form the branches on the mannan backbone of oligosaccharides. The polypeptide is Alpha-1,2-mannosyltransferase MNN2 (MNN2) (Saccharomyces cerevisiae (strain ATCC 204508 / S288c) (Baker's yeast)).